Here is a 300-residue protein sequence, read N- to C-terminus: Acetylglutamate kinase (300 aa).

Substrate contacts are provided by residues 68-69, R90, and N195; that span reads GG.

It belongs to the acetylglutamate kinase family. ArgB subfamily.

Its subcellular location is the cytoplasm. It carries out the reaction N-acetyl-L-glutamate + ATP = N-acetyl-L-glutamyl 5-phosphate + ADP. Its pathway is amino-acid biosynthesis; L-arginine biosynthesis; N(2)-acetyl-L-ornithine from L-glutamate: step 2/4. Its function is as follows. Catalyzes the ATP-dependent phosphorylation of N-acetyl-L-glutamate. The sequence is that of Acetylglutamate kinase from Azotobacter vinelandii (strain DJ / ATCC BAA-1303).